The chain runs to 489 residues: Glutamate--tRNA ligase (489 aa).

Residues 11 to 21 (PSPTGHLHIGG) carry the 'HIGH' region motif. Positions 253-257 (KLSKR) match the 'KMSKS' region motif. K256 lines the ATP pocket.

The protein belongs to the class-I aminoacyl-tRNA synthetase family. Glutamate--tRNA ligase type 1 subfamily. As to quaternary structure, monomer.

The protein localises to the cytoplasm. It catalyses the reaction tRNA(Glu) + L-glutamate + ATP = L-glutamyl-tRNA(Glu) + AMP + diphosphate. In terms of biological role, catalyzes the attachment of glutamate to tRNA(Glu) in a two-step reaction: glutamate is first activated by ATP to form Glu-AMP and then transferred to the acceptor end of tRNA(Glu). The polypeptide is Glutamate--tRNA ligase (Geobacillus stearothermophilus (Bacillus stearothermophilus)).